The sequence spans 204 residues: Ribosomal RNA small subunit methyltransferase J (204 aa).

Residues Arg55 to Asp56, Glu71 to Arg72, and Asp123 each bind S-adenosyl-L-methionine.

It belongs to the methyltransferase superfamily. RsmJ family.

The protein resides in the cytoplasm. The enzyme catalyses guanosine(1516) in 16S rRNA + S-adenosyl-L-methionine = N(2)-methylguanosine(1516) in 16S rRNA + S-adenosyl-L-homocysteine + H(+). Specifically methylates the guanosine in position 1516 of 16S rRNA. The sequence is that of Ribosomal RNA small subunit methyltransferase J from Rhodopseudomonas palustris (strain TIE-1).